The primary structure comprises 228 residues: ATP synthase F(0) complex subunit a (228 aa).

A run of 5 helical transmembrane segments spans residues 13–33 (NILAIPLMTISLLMLTIIFPM), 69–89 (WALILTSLMTLLLTSNLLGLL), 98–118 (QLSMNLGFALPMWLATLLIGL), 139–159 (IPTLILIESISLMIRPLALGV), and 194–214 (ILLFLLTILEMAVAMIQALVF).

This sequence belongs to the ATPase A chain family. Component of the ATP synthase complex composed at least of ATP5F1A/subunit alpha, ATP5F1B/subunit beta, ATP5MC1/subunit c (homooctomer), MT-ATP6/subunit a, MT-ATP8/subunit 8, ATP5ME/subunit e, ATP5MF/subunit f, ATP5MG/subunit g, ATP5MK/subunit k, ATP5MJ/subunit j, ATP5F1C/subunit gamma, ATP5F1D/subunit delta, ATP5F1E/subunit epsilon, ATP5PF/subunit F6, ATP5PB/subunit b, ATP5PD/subunit d, ATP5PO/subunit OSCP. ATP synthase complex consists of a soluble F(1) head domain (subunits alpha(3) and beta(3)) - the catalytic core - and a membrane F(0) domain - the membrane proton channel (subunits c, a, 8, e, f, g, k and j). These two domains are linked by a central stalk (subunits gamma, delta, and epsilon) rotating inside the F1 region and a stationary peripheral stalk (subunits F6, b, d, and OSCP). Interacts with DNAJC30; interaction is direct.

The protein resides in the mitochondrion inner membrane. The enzyme catalyses H(+)(in) = H(+)(out). In terms of biological role, subunit a, of the mitochondrial membrane ATP synthase complex (F(1)F(0) ATP synthase or Complex V) that produces ATP from ADP in the presence of a proton gradient across the membrane which is generated by electron transport complexes of the respiratory chain. ATP synthase complex consist of a soluble F(1) head domain - the catalytic core - and a membrane F(1) domain - the membrane proton channel. These two domains are linked by a central stalk rotating inside the F(1) region and a stationary peripheral stalk. During catalysis, ATP synthesis in the catalytic domain of F(1) is coupled via a rotary mechanism of the central stalk subunits to proton translocation. With the subunit c (ATP5MC1), forms the proton-conducting channel in the F(0) domain, that contains two crucial half-channels (inlet and outlet) that facilitate proton movement from the mitochondrial intermembrane space (IMS) into the matrix. Protons are taken up via the inlet half-channel and released through the outlet half-channel, following a Grotthuss mechanism. This chain is ATP synthase F(0) complex subunit a, found in Pelomedusa subrufa (African side-necked turtle).